The chain runs to 409 residues: Histidinol dehydrogenase homolog (409 aa).

Belongs to the histidinol dehydrogenase family.

This chain is Histidinol dehydrogenase homolog, found in Synechocystis sp. (strain ATCC 27184 / PCC 6803 / Kazusa).